The chain runs to 418 residues: MSGTAGFITVSPGPPTEAPGGFPREPRGHRVRFISFKPYKFYWGFPNMSYITLTLPFNVGGGEAGDLFSTAWLFKTATHRMLSLAKQTPILPATDIGWKNTFRKAIYEVIPNRRYVDGVITLVRGIYESCRQLGVGFKEVELGDWLMFQQAEKEYPVRNITLKDDYSFYITTIGYNGEKDRIVVKPTIPKNYKVLLDKILEERQKHTARIVIKDYGVRKNRLWVHGEIQLTIPIDFYYKHMTRYRRNYGKLYGGVDVNVDRANLAVVDRYGRLRHVKTFWFEEASRKGCRSRRARSIIGMTVHDMLKYAYHHGVKTLFLENPDVLGKLKLLWIRNGKRLHRNYNWRVSVFRSRIIEMITMKTPLYAIRVEYVDPRRTTHSEEHDKIMKRYGLDRHSTSAYLIALRGIERYSPIQKVTA.

The tract at residues 1–24 (MSGTAGFITVSPGPPTEAPGGFPR) is disordered.

It to A.pernix APE_1276 and S.solfataricus SSO2105.

This is an uncharacterized protein from Aeropyrum pernix (strain ATCC 700893 / DSM 11879 / JCM 9820 / NBRC 100138 / K1).